Reading from the N-terminus, the 750-residue chain is Photosystem I P700 chlorophyll a apoprotein A1 (750 aa).

8 helical membrane passes run 70–93, 156–179, 195–219, 291–309, 346–369, 385–411, 433–455, and 531–549; these read VFSA…FHGA, LYCT…FHYH, LNHH…HVSL, IAHH…GHMY, WHAQ…HHMY, LSLF…IFMV, AIIS…LYIH, and FLVH…LILL. Positions 573 and 582 each coordinate [4Fe-4S] cluster. The next 2 membrane-spanning stretches (helical) occupy residues 589–610 and 664–686; these read HVFL…HFSW and LSAY…MFLF. A chlorophyll a'-binding site is contributed by histidine 675. Methionine 683 and tyrosine 691 together coordinate chlorophyll a. Residue tryptophan 692 participates in phylloquinone binding. The chain crosses the membrane as a helical span at residues 724–744; that stretch reads AVGVTHYLLGGIATTWAFFLA.

It belongs to the PsaA/PsaB family. The PsaA/B heterodimer binds the P700 chlorophyll special pair and subsequent electron acceptors. PSI consists of a core antenna complex that captures photons, and an electron transfer chain that converts photonic excitation into a charge separation. The eukaryotic PSI reaction center is composed of at least 11 subunits. P700 is a chlorophyll a/chlorophyll a' dimer, A0 is one or more chlorophyll a, A1 is one or both phylloquinones and FX is a shared 4Fe-4S iron-sulfur center. serves as cofactor.

Its subcellular location is the plastid. The protein resides in the chloroplast thylakoid membrane. The enzyme catalyses reduced [plastocyanin] + hnu + oxidized [2Fe-2S]-[ferredoxin] = oxidized [plastocyanin] + reduced [2Fe-2S]-[ferredoxin]. Its function is as follows. PsaA and PsaB bind P700, the primary electron donor of photosystem I (PSI), as well as the electron acceptors A0, A1 and FX. PSI is a plastocyanin-ferredoxin oxidoreductase, converting photonic excitation into a charge separation, which transfers an electron from the donor P700 chlorophyll pair to the spectroscopically characterized acceptors A0, A1, FX, FA and FB in turn. Oxidized P700 is reduced on the lumenal side of the thylakoid membrane by plastocyanin. The protein is Photosystem I P700 chlorophyll a apoprotein A1 of Crucihimalaya wallichii (Rock-cress).